The following is a 264-amino-acid chain: Thymidylate synthase (264 aa).

R21 serves as a coordination point for dUMP. H51 serves as a coordination point for (6R)-5,10-methylene-5,6,7,8-tetrahydrofolate. Residue 126–127 (RR) participates in dUMP binding. C146 functions as the Nucleophile in the catalytic mechanism. Residues 166–169 (RSAD), N177, and 207–209 (HIY) contribute to the dUMP site. Residue D169 coordinates (6R)-5,10-methylene-5,6,7,8-tetrahydrofolate. A263 provides a ligand contact to (6R)-5,10-methylene-5,6,7,8-tetrahydrofolate.

This sequence belongs to the thymidylate synthase family. Bacterial-type ThyA subfamily. Homodimer.

The protein resides in the cytoplasm. It carries out the reaction dUMP + (6R)-5,10-methylene-5,6,7,8-tetrahydrofolate = 7,8-dihydrofolate + dTMP. Its pathway is pyrimidine metabolism; dTTP biosynthesis. Functionally, catalyzes the reductive methylation of 2'-deoxyuridine-5'-monophosphate (dUMP) to 2'-deoxythymidine-5'-monophosphate (dTMP) while utilizing 5,10-methylenetetrahydrofolate (mTHF) as the methyl donor and reductant in the reaction, yielding dihydrofolate (DHF) as a by-product. This enzymatic reaction provides an intracellular de novo source of dTMP, an essential precursor for DNA biosynthesis. The chain is Thymidylate synthase from Bacteroides thetaiotaomicron (strain ATCC 29148 / DSM 2079 / JCM 5827 / CCUG 10774 / NCTC 10582 / VPI-5482 / E50).